The primary structure comprises 307 residues: Elongation factor Ts (307 aa).

Residues 80–83 (TDFV) are involved in Mg(2+) ion dislocation from EF-Tu.

It belongs to the EF-Ts family.

Its subcellular location is the cytoplasm. Its function is as follows. Associates with the EF-Tu.GDP complex and induces the exchange of GDP to GTP. It remains bound to the aminoacyl-tRNA.EF-Tu.GTP complex up to the GTP hydrolysis stage on the ribosome. The protein is Elongation factor Ts of Rhodopseudomonas palustris (strain BisA53).